The primary structure comprises 253 residues: Putative tyrosine-protein phosphatase OCA1 (253 aa).

Residues 1-21 (MHRTSIVEELERHQQDQKADQ) are compositionally biased toward basic and acidic residues. The tract at residues 1-84 (MHRTSIVEEL…PRMKTIVKPP (84 aa)) is disordered. Polar residues predominate over residues 27–65 (SDASNSALQESSDPRLSTTDNTNTPEINVNDQQQEQQVA). The Tyrosine-protein phosphatase domain maps to 93-249 (NFGPVERNLY…IIVYPESAPE (157 aa)). The active-site Phosphocysteine intermediate is the C186.

It belongs to the protein-tyrosine phosphatase family.

The protein localises to the cytoplasm. The enzyme catalyses O-phospho-L-tyrosyl-[protein] + H2O = L-tyrosyl-[protein] + phosphate. Its function is as follows. Putative tyrosine-protein phosphatase required for protection against superoxide stress. The sequence is that of Putative tyrosine-protein phosphatase OCA1 (OCA1) from Yarrowia lipolytica (strain CLIB 122 / E 150) (Yeast).